We begin with the raw amino-acid sequence, 312 residues long: DNA-directed RNA polymerase subunit alpha (312 aa).

The interval 1-226 (MIEFEKPNIT…EHLNLFTNLT (226 aa)) is alpha N-terminal domain (alpha-NTD). Positions 243–312 (DDRILERTIE…DLGLGLKNDK (70 aa)) are alpha C-terminal domain (alpha-CTD).

This sequence belongs to the RNA polymerase alpha chain family. In terms of assembly, homodimer. The RNAP catalytic core consists of 2 alpha, 1 beta, 1 beta' and 1 omega subunit. When a sigma factor is associated with the core the holoenzyme is formed, which can initiate transcription.

The catalysed reaction is RNA(n) + a ribonucleoside 5'-triphosphate = RNA(n+1) + diphosphate. Functionally, DNA-dependent RNA polymerase catalyzes the transcription of DNA into RNA using the four ribonucleoside triphosphates as substrates. This is DNA-directed RNA polymerase subunit alpha from Streptococcus sanguinis (strain SK36).